The primary structure comprises 293 residues: Ribosomal protein L11 methyltransferase (293 aa).

S-adenosyl-L-methionine-binding residues include Thr-145, Gly-166, Asp-188, and Asn-230.

This sequence belongs to the methyltransferase superfamily. PrmA family.

It is found in the cytoplasm. The catalysed reaction is L-lysyl-[protein] + 3 S-adenosyl-L-methionine = N(6),N(6),N(6)-trimethyl-L-lysyl-[protein] + 3 S-adenosyl-L-homocysteine + 3 H(+). In terms of biological role, methylates ribosomal protein L11. The protein is Ribosomal protein L11 methyltransferase of Shewanella frigidimarina (strain NCIMB 400).